The chain runs to 345 residues: Uroporphyrinogen decarboxylase (345 aa).

Substrate contacts are provided by residues 28–32 (RQAGR), Asp77, Tyr153, Ser208, and His322.

It belongs to the uroporphyrinogen decarboxylase family. In terms of assembly, homodimer.

The protein resides in the cytoplasm. The catalysed reaction is uroporphyrinogen III + 4 H(+) = coproporphyrinogen III + 4 CO2. It functions in the pathway porphyrin-containing compound metabolism; protoporphyrin-IX biosynthesis; coproporphyrinogen-III from 5-aminolevulinate: step 4/4. Catalyzes the decarboxylation of four acetate groups of uroporphyrinogen-III to yield coproporphyrinogen-III. The protein is Uroporphyrinogen decarboxylase of Solibacter usitatus (strain Ellin6076).